Here is a 53-residue protein sequence, read N- to C-terminus: UPF0391 membrane protein BamMC406_6344 (53 aa).

2 helical membrane-spanning segments follow: residues 5 to 25 and 30 to 50; these read AIIFFVIAIIAAVFGFGGIAA and IAKILFYIFVVIFLVTLLLGV.

The protein belongs to the UPF0391 family.

It is found in the cell membrane. This is UPF0391 membrane protein BamMC406_6344 from Burkholderia ambifaria (strain MC40-6).